The following is a 354-amino-acid chain: UDP-N-acetylglucosamine--N-acetylmuramyl-(pentapeptide) pyrophosphoryl-undecaprenol N-acetylglucosamine transferase (354 aa).

UDP-N-acetyl-alpha-D-glucosamine is bound by residues 15–17 (TGG), asparagine 127, arginine 163, serine 191, isoleucine 244, 263–268 (ALTVSE), and glutamine 288.

The protein belongs to the glycosyltransferase 28 family. MurG subfamily.

It localises to the cell inner membrane. It catalyses the reaction di-trans,octa-cis-undecaprenyl diphospho-N-acetyl-alpha-D-muramoyl-L-alanyl-D-glutamyl-meso-2,6-diaminopimeloyl-D-alanyl-D-alanine + UDP-N-acetyl-alpha-D-glucosamine = di-trans,octa-cis-undecaprenyl diphospho-[N-acetyl-alpha-D-glucosaminyl-(1-&gt;4)]-N-acetyl-alpha-D-muramoyl-L-alanyl-D-glutamyl-meso-2,6-diaminopimeloyl-D-alanyl-D-alanine + UDP + H(+). Its pathway is cell wall biogenesis; peptidoglycan biosynthesis. Functionally, cell wall formation. Catalyzes the transfer of a GlcNAc subunit on undecaprenyl-pyrophosphoryl-MurNAc-pentapeptide (lipid intermediate I) to form undecaprenyl-pyrophosphoryl-MurNAc-(pentapeptide)GlcNAc (lipid intermediate II). This is UDP-N-acetylglucosamine--N-acetylmuramyl-(pentapeptide) pyrophosphoryl-undecaprenol N-acetylglucosamine transferase from Vibrio cholerae serotype O1 (strain ATCC 39541 / Classical Ogawa 395 / O395).